The sequence spans 235 residues: MNSIQFPLLDRTAKNSVISTTLNDLSNWSRLSSLWPLLYGTSCCFIEFASLIGSRFDFDRYGLVPRSSPRQADLILTAGTVTMKMAPSLVRLYEQMPEPKYVIAMGACTITGGMFSTDSYSTVRGVDKLIPVDVYLPGCPPKPEAIIDAITKLRKKISREIYQDRMKSQRANRCFTTNHKFRVGHSIHTGNYDQRFLSQPPSTSSIPTETETLFTYKNSVSSHELVNSAGFFGTK.

[4Fe-4S] cluster is bound by residues Cys-43, Cys-44, Cys-108, and Cys-139.

It belongs to the complex I 20 kDa subunit family. In terms of assembly, NDH is composed of at least 16 different subunits, 5 of which are encoded in the nucleus. It depends on [4Fe-4S] cluster as a cofactor.

It is found in the plastid. Its subcellular location is the chloroplast thylakoid membrane. The catalysed reaction is a plastoquinone + NADH + (n+1) H(+)(in) = a plastoquinol + NAD(+) + n H(+)(out). It catalyses the reaction a plastoquinone + NADPH + (n+1) H(+)(in) = a plastoquinol + NADP(+) + n H(+)(out). In terms of biological role, NDH shuttles electrons from NAD(P)H:plastoquinone, via FMN and iron-sulfur (Fe-S) centers, to quinones in the photosynthetic chain and possibly in a chloroplast respiratory chain. The immediate electron acceptor for the enzyme in this species is believed to be plastoquinone. Couples the redox reaction to proton translocation, and thus conserves the redox energy in a proton gradient. The chain is NAD(P)H-quinone oxidoreductase subunit K, chloroplastic from Ipomoea purpurea (Common morning glory).